The sequence spans 456 residues: Toxin CfTX-1 (456 aa).

Residues 1-20 form the signal peptide; sequence MVKMLFFAFLPLLFMTGIAA.

The protein belongs to the jellyfish toxin family. Type I subfamily. Oligomer. In terms of processing, contains disulfide bonds. In terms of tissue distribution, nematocytes.

It localises to the secreted. It is found in the nematocyst. The protein resides in the target cell membrane. Functionally, may cause profound effects on the cardiovascular system of anesthetized rats (at 25 ug/kg), since the fraction containing this toxin and CfTX-2 produces an initial increase in mean arterial pressure, followed by cardiovascular collapse in all animals within 1 minute of injection. To note, the same fraction does not induce significant change in heart rate. Has weak hemolytic activity. Is lethal to crayfish. Causes cutaneous inflammation in humans. May act as a pore-forming toxin, disrupting normal transmembrane ion concentration gradients in susceptible cells. The chain is Toxin CfTX-1 from Chironex fleckeri (Australian box jellyfish).